We begin with the raw amino-acid sequence, 253 residues long: Transmembrane protein 51 (253 aa).

Helical transmembrane passes span 17–37 (IGLGMLVLGVIMAMWNLVPGF) and 65–85 (VAYVLVGAGVMLLLLSICLSI). Disordered stretches follow at residues 93-133 (QGED…YVPS) and 164-253 (LTGL…RPPD). Residues 113–124 (EDSQEEEEEDEE) are compositionally biased toward acidic residues. Serine 115 carries the phosphoserine modification. Residues 164–176 (LTGLDETTPTSTR) are compositionally biased toward polar residues. Residues serine 182 and serine 192 each carry the phosphoserine modification. Residues 194–205 (LAKRLKPLKVRR) are compositionally biased toward basic residues. Residues 206–217 (IKSEKLHLKDFR) show a composition bias toward basic and acidic residues. Pro residues predominate over residues 224-238 (NVPPPSIEPLTPPPQ). A compositionally biased stretch (basic and acidic residues) spans 242-253 (VQEKAPDTRPPD).

Its subcellular location is the membrane. The chain is Transmembrane protein 51 (TMEM51) from Homo sapiens (Human).